Consider the following 329-residue polypeptide: GMP reductase (329 aa).

Catalysis depends on cysteine 178, which acts as the Thioimidate intermediate. Position 207-230 (valine 207–valine 230) interacts with NADP(+).

This sequence belongs to the IMPDH/GMPR family. GuaC type 2 subfamily.

The catalysed reaction is IMP + NH4(+) + NADP(+) = GMP + NADPH + 2 H(+). Functionally, catalyzes the irreversible NADPH-dependent deamination of GMP to IMP. It functions in the conversion of nucleobase, nucleoside and nucleotide derivatives of G to A nucleotides, and in maintaining the intracellular balance of A and G nucleotides. This is GMP reductase from Lactococcus lactis subsp. cremoris (strain MG1363).